The chain runs to 368 residues: 3-dehydroquinate synthase (368 aa).

NAD(+) is bound by residues Gly-109 to Asp-113, Thr-133 to Ser-134, Lys-146, Lys-155, and Thr-173 to Thr-176. Zn(2+) contacts are provided by Glu-188, His-253, and His-270.

It belongs to the sugar phosphate cyclases superfamily. Dehydroquinate synthase family. Requires Co(2+) as cofactor. It depends on Zn(2+) as a cofactor. NAD(+) serves as cofactor.

It is found in the cytoplasm. The enzyme catalyses 7-phospho-2-dehydro-3-deoxy-D-arabino-heptonate = 3-dehydroquinate + phosphate. It participates in metabolic intermediate biosynthesis; chorismate biosynthesis; chorismate from D-erythrose 4-phosphate and phosphoenolpyruvate: step 2/7. Functionally, catalyzes the conversion of 3-deoxy-D-arabino-heptulosonate 7-phosphate (DAHP) to dehydroquinate (DHQ). This Synechococcus sp. (strain ATCC 27144 / PCC 6301 / SAUG 1402/1) (Anacystis nidulans) protein is 3-dehydroquinate synthase.